Here is a 141-residue protein sequence, read N- to C-terminus: Large ribosomal subunit protein uL11 (141 aa).

Belongs to the universal ribosomal protein uL11 family. As to quaternary structure, part of the ribosomal stalk of the 50S ribosomal subunit. Interacts with L10 and the large rRNA to form the base of the stalk. L10 forms an elongated spine to which L12 dimers bind in a sequential fashion forming a multimeric L10(L12)X complex. In terms of processing, one or more lysine residues are methylated.

In terms of biological role, forms part of the ribosomal stalk which helps the ribosome interact with GTP-bound translation factors. The chain is Large ribosomal subunit protein uL11 from Alkaliphilus metalliredigens (strain QYMF).